Reading from the N-terminus, the 63-residue chain is UPF0434 protein Mmar10_2939 (63 aa).

Belongs to the UPF0434 family.

This Maricaulis maris (strain MCS10) (Caulobacter maris) protein is UPF0434 protein Mmar10_2939.